The sequence spans 545 residues: CTP synthase (545 aa).

The tract at residues 1-265 (MSKYIFVTGG…LVPIAKQLDL (265 aa)) is amidoligase domain. S13 is a binding site for CTP. UTP is bound at residue S13. Residues 14–19 (SLGKGI) and D71 each bind ATP. Positions 71 and 139 each coordinate Mg(2+). CTP contacts are provided by residues 146–148 (DIE), 186–191 (KTKPTQ), and K222. UTP-binding positions include 186-191 (KTKPTQ) and K222. The 255-residue stretch at 290 to 544 (KIAFVGKYLQ…VENAYKCQRS (255 aa)) folds into the Glutamine amidotransferase type-1 domain. G355 contacts L-glutamine. Residue C382 is the Nucleophile; for glutamine hydrolysis of the active site. L-glutamine is bound by residues 383–386 (LGMQ), E406, and R473. Active-site residues include H517 and E519.

The protein belongs to the CTP synthase family. As to quaternary structure, homotetramer.

It catalyses the reaction UTP + L-glutamine + ATP + H2O = CTP + L-glutamate + ADP + phosphate + 2 H(+). It carries out the reaction L-glutamine + H2O = L-glutamate + NH4(+). The catalysed reaction is UTP + NH4(+) + ATP = CTP + ADP + phosphate + 2 H(+). Its pathway is pyrimidine metabolism; CTP biosynthesis via de novo pathway; CTP from UDP: step 2/2. Allosterically activated by GTP, when glutamine is the substrate; GTP has no effect on the reaction when ammonia is the substrate. The allosteric effector GTP functions by stabilizing the protein conformation that binds the tetrahedral intermediate(s) formed during glutamine hydrolysis. Inhibited by the product CTP, via allosteric rather than competitive inhibition. Its function is as follows. Catalyzes the ATP-dependent amination of UTP to CTP with either L-glutamine or ammonia as the source of nitrogen. Regulates intracellular CTP levels through interactions with the four ribonucleotide triphosphates. The sequence is that of CTP synthase from Nautilia profundicola (strain ATCC BAA-1463 / DSM 18972 / AmH).